The primary structure comprises 319 residues: Ribonuclease Z (319 aa).

His62, His64, Asp66, His67, His145, Asp216, and His274 together coordinate Zn(2+). The active-site Proton acceptor is the Asp66.

It belongs to the RNase Z family. As to quaternary structure, homodimer. Requires Zn(2+) as cofactor.

It catalyses the reaction Endonucleolytic cleavage of RNA, removing extra 3' nucleotides from tRNA precursor, generating 3' termini of tRNAs. A 3'-hydroxy group is left at the tRNA terminus and a 5'-phosphoryl group is left at the trailer molecule.. In terms of biological role, zinc phosphodiesterase, which displays some tRNA 3'-processing endonuclease activity. Probably involved in tRNA maturation, by removing a 3'-trailer from precursor tRNA. The sequence is that of Ribonuclease Z from Synechococcus sp. (strain CC9902).